A 512-amino-acid chain; its full sequence is Ribose import ATP-binding protein RbsA 2 (512 aa).

ABC transporter domains are found at residues 22–258 and 263–512; these read LEMR…VGRD and FPKV…TGNA. 54–61 contributes to the ATP binding site; that stretch reads GENGAGKS.

This sequence belongs to the ABC transporter superfamily. Ribose importer (TC 3.A.1.2.1) family. In terms of assembly, the complex is composed of an ATP-binding protein (RbsA), two transmembrane proteins (RbsC) and a solute-binding protein (RbsB).

Its subcellular location is the cell inner membrane. It carries out the reaction D-ribose(out) + ATP + H2O = D-ribose(in) + ADP + phosphate + H(+). In terms of biological role, part of the ABC transporter complex RbsABC involved in ribose import. Responsible for energy coupling to the transport system. This chain is Ribose import ATP-binding protein RbsA 2, found in Rhizobium johnstonii (strain DSM 114642 / LMG 32736 / 3841) (Rhizobium leguminosarum bv. viciae).